A 271-amino-acid chain; its full sequence is MSTQPIIYVLSDSVGETAELVVKAGLSQFKNGDYKIQRVPYVEDKETVDEFLALAKDTVSIVGFTLVDPELRAYVNSQAKKLEVEAIDIMGPTMDAMGRVFNRTPRLEAGLVHKLDEDYFKKIEAIEFAVKYDDGRDPRGIARADIILIGVSRTSKTPLSQYLAHKRIKVANVPIVPEVDPPEELMMVDPKKCIGLKITAEKLNSIRKERLKALGLGDQATYANMNRIEQELEYFQSIVDKIGCQVIDVSNKAVEETANHILRLKQENNSL.

Residue 150 to 157 participates in ADP binding; that stretch reads GVSRTSKT.

This sequence belongs to the pyruvate, phosphate/water dikinase regulatory protein family. PDRP subfamily.

The catalysed reaction is N(tele)-phospho-L-histidyl/L-threonyl-[pyruvate, phosphate dikinase] + ADP = N(tele)-phospho-L-histidyl/O-phospho-L-threonyl-[pyruvate, phosphate dikinase] + AMP + H(+). The enzyme catalyses N(tele)-phospho-L-histidyl/O-phospho-L-threonyl-[pyruvate, phosphate dikinase] + phosphate + H(+) = N(tele)-phospho-L-histidyl/L-threonyl-[pyruvate, phosphate dikinase] + diphosphate. Bifunctional serine/threonine kinase and phosphorylase involved in the regulation of the pyruvate, phosphate dikinase (PPDK) by catalyzing its phosphorylation/dephosphorylation. The chain is Putative pyruvate, phosphate dikinase regulatory protein from Oceanobacillus iheyensis (strain DSM 14371 / CIP 107618 / JCM 11309 / KCTC 3954 / HTE831).